The sequence spans 124 residues: SPbeta prophage-derived uncharacterized protein YoqO (124 aa).

A run of 2 helical transmembrane segments spans residues 54-74 (LVVI…LLSF) and 88-108 (VIFI…ISIM).

The protein localises to the cell membrane. This Bacillus subtilis (strain 168) protein is SPbeta prophage-derived uncharacterized protein YoqO (yoqO).